Consider the following 231-residue polypeptide: Regulatory factor X-associated protein (231 aa).

Positions 1–163 are disordered; sequence MEAQAVPEGS…GNVKLEESTD (163 aa). A compositionally biased stretch (acidic residues) spans 50–65; the sequence is ADAEDEAGDDDADLLD. The segment covering 115 to 138 has biased composition (basic residues); that stretch reads KQRKPWMCKKHRNKMYKDKYKKKK. Positions 123–138 match the Nuclear localization signal motif; the sequence is KKHRNKMYKDKYKKKK. Lys-157 participates in a covalent cross-link: Glycyl lysine isopeptide (Lys-Gly) (interchain with G-Cter in SUMO2).

In terms of assembly, RFX consists of at least 3 different subunits; RFXAP, RFX5 and RFX-B/RFXANK; with each subunit representing a separate complementation group. RFX forms cooperative DNA binding complexes with X2BP and CBF/NF-Y. RFX associates with CIITA to form an active transcriptional complex. In terms of processing, phosphorylated.

It localises to the nucleus. In terms of biological role, part of the RFX complex that binds to the X-box of MHC II promoters. This Mus musculus (Mouse) protein is Regulatory factor X-associated protein (Rfxap).